A 357-amino-acid chain; its full sequence is sn-glycerol-3-phosphate import ATP-binding protein UgpC (357 aa).

In terms of domain architecture, ABC transporter spans 4 to 235 (LKLQAVTKSY…PASLFVASFI (232 aa)). 37-44 (GPSGCGKS) contacts ATP.

It belongs to the ABC transporter superfamily. sn-glycerol-3-phosphate importer (TC 3.A.1.1.3) family. As to quaternary structure, the complex is composed of two ATP-binding proteins (UgpC), two transmembrane proteins (UgpA and UgpE) and a solute-binding protein (UgpB).

It localises to the cell inner membrane. It catalyses the reaction sn-glycerol 3-phosphate(out) + ATP + H2O = sn-glycerol 3-phosphate(in) + ADP + phosphate + H(+). Part of the ABC transporter complex UgpBAEC involved in sn-glycerol-3-phosphate (G3P) import. Responsible for energy coupling to the transport system. In Pectobacterium atrosepticum (strain SCRI 1043 / ATCC BAA-672) (Erwinia carotovora subsp. atroseptica), this protein is sn-glycerol-3-phosphate import ATP-binding protein UgpC.